Reading from the N-terminus, the 182-residue chain is Protein Syd (182 aa).

This sequence belongs to the Syd family.

It localises to the cell inner membrane. In terms of biological role, interacts with the SecY protein in vivo. May bind preferentially to an uncomplexed state of SecY, thus functioning either as a chelating agent for excess SecY in the cell or as a regulatory factor that negatively controls the translocase function. In Pectobacterium carotovorum subsp. carotovorum (strain PC1), this protein is Protein Syd.